A 519-amino-acid chain; its full sequence is Cyclic AMP-responsive element-binding protein 3-like protein 1 (519 aa).

The tract at residues 1–60 (MDAVLEPFPADRLFPGSSFLDLGDLNESDFLNNAHFPEHLDHFVENMEDFSNDLFSSFFD) is required for transcription activation. The Cytoplasmic portion of the chain corresponds to 1 to 376 (MDAVLEPFPA…MAATQTGTCL (376 aa)). Lysine 184 participates in a covalent cross-link: Glycyl lysine isopeptide (Lys-Gly) (interchain with G-Cter in SUMO2). Residues 200–259 (DLVQMPPTPPSSHGSDSDGSQSPRSLPPSSPVRPMARSSTAISTSPLLTAPHKLQGTSGP) are disordered. Positions 210–223 (SSHGSDSDGSQSPR) are enriched in low complexity. Over residues 236-246 (RSSTAISTSPL) the composition is skewed to polar residues. A bZIP domain is found at 290–353 (ALKRVRRKIK…RTLLQQLQKL (64 aa)). The tract at residues 292 to 321 (KRVRRKIKNKISAQESRRKKKEYVECLEKK) is basic motif. The interval 332–353 (LWKKVETLETANRTLLQQLQKL) is leucine-zipper. The chain crosses the membrane as a helical; Signal-anchor for type II membrane protein span at residues 377 to 397 (MVAALCFVLVLGSLVPCLPAF). The S2P recognition signature appears at 392–395 (PCLP). Over 398–519 (SSGSMTVKED…LGPNTTIKLS (122 aa)) the chain is Lumenal. Residues 423 to 426 (RSLL) carry the S1P recognition motif. The tract at residues 449–519 (EGWELKPGGP…LGPNTTIKLS (71 aa)) is disordered. The span at 462–486 (RPQDHLRHDRADSIHETTKYLRETW) shows a compositional bias: basic and acidic residues. N-linked (GlcNAc...) asparagine glycosylation is found at asparagine 493, asparagine 498, and asparagine 513.

Belongs to the bZIP family. ATF subfamily. As to quaternary structure, interacts with SMAD4, the interaction takes place upon TGFB1 induction and SMAD4 acts as a CREB3L1 coactivator to induce the expression of genes involved in assembly of collagen extracellular matrix. Post-translationally, N-glycosylated. In terms of processing, ubiquitinated by HRD1/SYVN1; undergoes 'Lys-48'-linked ubiquitination, followed by rapid proteasomal degradation under normal conditions. Upon ER stress, SYVN1 E3 ubiquitin-protein ligase dissociates from its substrate, ubiquitination does not occur and CREB3L1 is stabilized. Upon ER stress or DNA damage, translocated to the Golgi apparatus, where it is processed by regulated intramembrane proteolysis (RIP) to release the cytosol-facing N-terminal transcription factor domain. The cleavage is performed sequentially by site-1 and site-2 proteases (S1P/MBTPS1 and S2P/MBTPS2). RIP is induced by TGFB1 and ceramide. In terms of tissue distribution, expressed in cortical and trabecular bones. Highly expressed in osteoblasts, but not detected in osteoclasts, nor in macrophages. Expressed at relatively low levels in lung and kidney. Weakly expressed in brain and spleen. Expressed in astrocytes.

The protein localises to the endoplasmic reticulum membrane. It is found in the nucleus. Precursor of the transcription factor form (Processed cyclic AMP-responsive element-binding protein 3-like protein 1), which is embedded in the endoplasmic reticulum membrane with N-terminal DNA-binding and transcription activation domains oriented toward the cytosolic face of the membrane. In response to ER stress or DNA damage, transported to the Golgi, where it is cleaved in a site-specific manner by resident proteases S1P/MBTPS1 and S2P/MBTPS2. The released N-terminal cytosolic domain is translocated to the nucleus where it activates transcription of specific target genes involved in the cell-cycle progression inhibition. In terms of biological role, transcription factor involved in cell type specific DNA damage and unfolded protein response (UPR). Binds the DNA consensus sequence 5'-GTGXGCXGC-3'. Plays a critical role in bone formation through the transcription of COL1A1, and possibly COL1A2, and the secretion of bone matrix proteins. Directly binds to the UPR element (UPRE)-like sequence in an osteoblast-specific COL1A1 promoter region and induces its transcription. Does not regulate COL1A1 in other tissues, such as skin. Required to protect astrocytes from ER stress-induced cell death. In astrocytes, binds to the cAMP response element (CRE) of the BiP/HSPA5 promoter and participate in its transcriptional activation. In astrocytes and osteoblasts, upon DNA damage, inhibits cell-cycle progression after G2/M phase by binding to promoters and activating transcription of genes encoding cell-cycle inhibitors, such as p21/CDKN1A. Required for TGFB1 to activate genes involved in the assembly of collagen extracellular matrix. The chain is Cyclic AMP-responsive element-binding protein 3-like protein 1 (Creb3l1) from Mus musculus (Mouse).